We begin with the raw amino-acid sequence, 371 residues long: Probable protein phosphatase 2C 11 (371 aa).

A helical transmembrane segment spans residues Phe-29 to Leu-49. Positions Pro-67 to Leu-95 are disordered. Residues Ser-85 to Ser-94 are compositionally biased toward low complexity. Residues Ser-123–Phe-368 enclose the PPM-type phosphatase domain. The Mn(2+) site is built by Asp-159, Gly-160, Asp-320, and Asp-359.

The protein belongs to the PP2C family. Requires Mg(2+) as cofactor. Mn(2+) serves as cofactor.

The protein resides in the membrane. It carries out the reaction O-phospho-L-seryl-[protein] + H2O = L-seryl-[protein] + phosphate. The enzyme catalyses O-phospho-L-threonyl-[protein] + H2O = L-threonyl-[protein] + phosphate. This Arabidopsis thaliana (Mouse-ear cress) protein is Probable protein phosphatase 2C 11.